A 338-amino-acid chain; its full sequence is tRNA N6-adenosine threonylcarbamoyltransferase (338 aa).

Fe cation-binding residues include histidine 112 and histidine 116. Substrate is bound by residues 135 to 139 (LVSGG), aspartate 168, glycine 181, and asparagine 273. Aspartate 301 serves as a coordination point for Fe cation.

It belongs to the KAE1 / TsaD family. The cofactor is Fe(2+).

It localises to the cytoplasm. It catalyses the reaction L-threonylcarbamoyladenylate + adenosine(37) in tRNA = N(6)-L-threonylcarbamoyladenosine(37) in tRNA + AMP + H(+). In terms of biological role, required for the formation of a threonylcarbamoyl group on adenosine at position 37 (t(6)A37) in tRNAs that read codons beginning with adenine. Is involved in the transfer of the threonylcarbamoyl moiety of threonylcarbamoyl-AMP (TC-AMP) to the N6 group of A37, together with TsaE and TsaB. TsaD likely plays a direct catalytic role in this reaction. The polypeptide is tRNA N6-adenosine threonylcarbamoyltransferase (Buchnera aphidicola subsp. Baizongia pistaciae (strain Bp)).